Reading from the N-terminus, the 493-residue chain is EGF-containing fibulin-like extracellular matrix protein 1 (493 aa).

A signal peptide spans 1 to 17 (MLKALFLTMLTLALVKS). Residues 26 to 71 (YTQCTDGYEWDPVRQQCKDIDECDIVPDACKGGMKCVNHYGGYLCL) enclose the EGF-like 1; atypical domain. In terms of domain architecture, EGF-like 2; calcium-binding spans 173 to 213 (DIDECTAGTHNCRADQVCINLRGSFACQCPPGYQKRGEQCV). Disulfide bonds link cysteine 177–cysteine 190, cysteine 184–cysteine 199, cysteine 201–cysteine 212, cysteine 218–cysteine 228, cysteine 224–cysteine 237, cysteine 239–cysteine 252, cysteine 258–cysteine 268, cysteine 264–cysteine 277, cysteine 279–cysteine 292, cysteine 298–cysteine 309, cysteine 305–cysteine 318, cysteine 320–cysteine 332, cysteine 338–cysteine 350, cysteine 344–cysteine 359, and cysteine 365–cysteine 377. Residues 214–253 (DIDECTIPPYCHQRCVNTPGSFYCQCSPGFQLAANNYTCV) enclose the EGF-like 3; calcium-binding domain. An N-linked (GlcNAc...) asparagine glycan is attached at asparagine 249. Residues 254–293 (DINECDASNQCAQQCYNILGSFICQCNQGYELSSDRLNCE) enclose the EGF-like 4; calcium-binding domain. A mediates interaction with TIMP3 region spans residues 259-493 (DASNQCAQQC…LTIIVGPFSF (235 aa)). Positions 294-333 (DIDECRTSSYLCQYQCVNEPGKFSCMCPQGYQVVRSRTCQ) constitute an EGF-like 5; calcium-binding domain. The EGF-like 6; calcium-binding domain maps to 334-378 (DINECETTNECREDEMCWNYHGGFRCYPRNPCQDPYILTPENRCV).

It belongs to the fibulin family. Interacts with ECM1. Interacts with TIMP3.

The protein resides in the secreted. It is found in the extracellular space. Its subcellular location is the extracellular matrix. Functionally, binds EGFR, the EGF receptor, inducing EGFR autophosphorylation and the activation of downstream signaling pathways. May play a role in cell adhesion and migration. May function as a negative regulator of chondrocyte differentiation. In the olfactory epithelium, it may regulate glial cell migration, differentiation and the ability of glial cells to support neuronal neurite outgrowth. The polypeptide is EGF-containing fibulin-like extracellular matrix protein 1 (EFEMP1) (Macaca fascicularis (Crab-eating macaque)).